Here is a 527-residue protein sequence, read N- to C-terminus: Beta-glucosidase 19 (527 aa).

The signal sequence occupies residues 1 to 21 (MKIPLLGLLLLISLVGSPTRA). A beta-D-glucoside is bound by residues glutamine 52 and histidine 155. N-linked (GlcNAc...) asparagine glycosylation occurs at asparagine 183. 200–201 (NE) serves as a coordination point for a beta-D-glucoside. Glutamate 201 acts as the Proton donor in catalysis. A disulfide bridge links cysteine 220 with cysteine 231. Residues tyrosine 345 and glutamate 418 each coordinate a beta-D-glucoside. The Nucleophile role is filled by glutamate 418. The N-linked (GlcNAc...) asparagine glycan is linked to asparagine 462. A beta-D-glucoside contacts are provided by residues tryptophan 469, 476–477 (EW), and phenylalanine 485. The N-linked (GlcNAc...) asparagine glycan is linked to asparagine 495. Positions 524–527 (HEEL) match the Prevents secretion from ER motif.

The protein belongs to the glycosyl hydrolase 1 family.

The protein localises to the endoplasmic reticulum lumen. The catalysed reaction is Hydrolysis of terminal, non-reducing beta-D-glucosyl residues with release of beta-D-glucose.. The protein is Beta-glucosidase 19 of Arabidopsis thaliana (Mouse-ear cress).